The primary structure comprises 338 residues: MLIAQRPTLTEEVVADNRSRFVIEPLEPGFGYTLGNSLRRTLLSSIPGAAVTSIRIDGVLHEFTTVPGVKEDVTEIILNIKNIVVSSENDEPVVMYLRKQGPGVVTAADITPPAGVEVHNPDLHIATVNGKGKLEVELTVERGRGYVSAQQNKAYDTEIGRIPVDSIYSPVLKVTYKVEATRVEQRTDFDKLIVDVESKPAISPRDAVASAGKTLVELFGLARELNTAAEGIEIGPSPTDAALAADLALPIEDLDLTIRSYNCLKREGIHQVGELVARSEADLLDIRNFGAKSITEVKEKLAALGLSLKDSPADFDPSLVTDAYDGDLDADYADEQYN.

Residues 1–226 (MLIAQRPTLT…ELFGLARELN (226 aa)) are alpha N-terminal domain (alpha-NTD). Residues 243–338 (LAADLALPIE…DADYADEQYN (96 aa)) form an alpha C-terminal domain (alpha-CTD) region.

This sequence belongs to the RNA polymerase alpha chain family. In terms of assembly, homodimer. The RNAP catalytic core consists of 2 alpha, 1 beta, 1 beta' and 1 omega subunit. When a sigma factor is associated with the core the holoenzyme is formed, which can initiate transcription.

It carries out the reaction RNA(n) + a ribonucleoside 5'-triphosphate = RNA(n+1) + diphosphate. DNA-dependent RNA polymerase catalyzes the transcription of DNA into RNA using the four ribonucleoside triphosphates as substrates. This is DNA-directed RNA polymerase subunit alpha from Beutenbergia cavernae (strain ATCC BAA-8 / DSM 12333 / CCUG 43141 / JCM 11478 / NBRC 16432 / NCIMB 13614 / HKI 0122).